Reading from the N-terminus, the 96-residue chain is RNA-binding protein Hfq (96 aa).

One can recognise a Sm domain in the interval 9–68 (DPFLNALRRERVPVSIYLVNGIKLQGQIESFDQFVILLKNTVSQMVYKHAISTVVPSRPV). The tract at residues 64–96 (PSRPVSHHSNTGTNQAGTNYSGGNATQQDDVAE) is disordered. The span at 70 to 96 (HHSNTGTNQAGTNYSGGNATQQDDVAE) shows a compositional bias: polar residues.

The protein belongs to the Hfq family. In terms of assembly, homohexamer.

RNA chaperone that binds small regulatory RNA (sRNAs) and mRNAs to facilitate mRNA translational regulation in response to envelope stress, environmental stress and changes in metabolite concentrations. Also binds with high specificity to tRNAs. The protein is RNA-binding protein Hfq of Proteus mirabilis (strain HI4320).